The following is a 168-amino-acid chain: Transcription antitermination protein NusB (168 aa).

Belongs to the NusB family.

Functionally, involved in transcription antitermination. Required for transcription of ribosomal RNA (rRNA) genes. Binds specifically to the boxA antiterminator sequence of the ribosomal RNA (rrn) operons. The chain is Transcription antitermination protein NusB from Chlamydia trachomatis serovar D (strain ATCC VR-885 / DSM 19411 / UW-3/Cx).